Consider the following 66-residue polypeptide: Large ribosomal subunit protein bL31 (66 aa).

Cysteine 16, cysteine 18, cysteine 36, and cysteine 39 together coordinate Zn(2+).

It belongs to the bacterial ribosomal protein bL31 family. Type A subfamily. As to quaternary structure, part of the 50S ribosomal subunit. Requires Zn(2+) as cofactor.

Its function is as follows. Binds the 23S rRNA. The protein is Large ribosomal subunit protein bL31 of Geobacillus thermodenitrificans (strain NG80-2).